Here is a 293-residue protein sequence, read N- to C-terminus: Small ribosomal subunit protein uS3 (293 aa).

The region spanning 39 to 110 (IRREIMKFLK…KISIKIKEVK (72 aa)) is the KH type-2 domain.

The protein belongs to the universal ribosomal protein uS3 family. In terms of assembly, part of the 30S ribosomal subunit. Forms a tight complex with proteins S10 and S14.

Functionally, binds the lower part of the 30S subunit head. Binds mRNA in the 70S ribosome, positioning it for translation. The polypeptide is Small ribosomal subunit protein uS3 (Borreliella burgdorferi (strain ATCC 35210 / DSM 4680 / CIP 102532 / B31) (Borrelia burgdorferi)).